We begin with the raw amino-acid sequence, 517 residues long: Cytochrome P450 monooxygenase 124 (517 aa).

Residues 3-23 (SLLVLFVSLLALGALKKHLDF) traverse the membrane as a helical segment. A heme-binding site is contributed by Cys453.

Belongs to the cytochrome P450 family. It depends on heme as a cofactor.

It localises to the membrane. It functions in the pathway secondary metabolite biosynthesis. Functionally, cytochrome P450 monooxygenase that is able to use trans-stilbene as a substrate for oxidation. This chain is Cytochrome P450 monooxygenase 124, found in Postia placenta (strain ATCC 44394 / Madison 698-R) (Brown rot fungus).